A 932-amino-acid polypeptide reads, in one-letter code: Protein translocase subunit SecA (932 aa).

ATP contacts are provided by residues Q83, 101 to 105, and D491; that span reads GEGKT.

The protein belongs to the SecA family. As to quaternary structure, monomer and homodimer. Part of the essential Sec protein translocation apparatus which comprises SecA, SecYEG and auxiliary proteins SecDF. Other proteins may also be involved.

The protein localises to the cell inner membrane. It is found in the cellular thylakoid membrane. It localises to the cytoplasm. The enzyme catalyses ATP + H2O + cellular proteinSide 1 = ADP + phosphate + cellular proteinSide 2.. Part of the Sec protein translocase complex. Interacts with the SecYEG preprotein conducting channel. Has a central role in coupling the hydrolysis of ATP to the transfer of proteins into and across the cell membrane, serving as an ATP-driven molecular motor driving the stepwise translocation of polypeptide chains across the membrane. In terms of biological role, probably participates in protein translocation into and across both the cytoplasmic and thylakoid membranes in cyanobacterial cells. The polypeptide is Protein translocase subunit SecA (Cyanothece sp. (strain PCC 7425 / ATCC 29141)).